The following is a 349-amino-acid chain: Transmembrane protein 255A (349 aa).

Helical transmembrane passes span 30 to 50 (IYVT…GLAA), 57 to 77 (VTVG…LGII), 89 to 109 (LVAS…CAIV), and 226 to 246 (TILN…LGGF). Residues 301–329 (VFPSSPPSGLSDEPQSASPSPSYMWSSSA) form a disordered region. The segment covering 316–329 (SASPSPSYMWSSSA) has biased composition (low complexity).

Belongs to the TMEM255 family.

Its subcellular location is the membrane. This is Transmembrane protein 255A (TMEM255A) from Macaca fascicularis (Crab-eating macaque).